An 89-amino-acid polypeptide reads, in one-letter code: Probable Fe(2+)-trafficking protein (89 aa).

The protein belongs to the Fe(2+)-trafficking protein family.

In terms of biological role, could be a mediator in iron transactions between iron acquisition and iron-requiring processes, such as synthesis and/or repair of Fe-S clusters in biosynthetic enzymes. The polypeptide is Probable Fe(2+)-trafficking protein (Hahella chejuensis (strain KCTC 2396)).